Reading from the N-terminus, the 407-residue chain is Uronyl 2-sulfotransferase (407 aa).

Positions 1–20 (MKKKQQQHPGGGTDPWPHGA) are disordered. Over 1–49 (MKKKQQQHPGGGTDPWPHGAPVGGAPPCLGSCKRRIPLLPFLRFSLRDY) the chain is Cytoplasmic. A helical; Signal-anchor for type II membrane protein transmembrane segment spans residues 50-70 (GFCMATLLVFCLGSLFYQLSG). Residues 71–407 (GPPRFLLDLR…EKWLEDIYKR (337 aa)) are Lumenal-facing. N-linked (GlcNAc...) asparagine glycans are attached at residues Asn85, Asn141, and Asn156. His169 is a catalytic residue. Asn174 and Asn320 each carry an N-linked (GlcNAc...) asparagine glycan. The span at 386-400 (TEEPIDDEEQDDEKW) shows a compositional bias: acidic residues. The interval 386 to 407 (TEEPIDDEEQDDEKWLEDIYKR) is disordered.

This sequence belongs to the sulfotransferase 3 family.

Its subcellular location is the golgi apparatus membrane. In terms of biological role, sulfotransferase that catalyzes the transfer of sulfate to the position 2 of uronyl residues in glycosaminoglycan chains. Has mainly activity toward iduronyl residues in dermatan sulfate, and weaker activity toward glucuronyl residues of chondroitin sulfate. Has no activity toward desulfated N-resulfated heparin. The protein is Uronyl 2-sulfotransferase of Mus musculus (Mouse).